The following is a 240-amino-acid chain: MNGIEWLAKELSEHGIELSDKQKEQFQTYYRLLVEWNEKMNLTSITDEHEVYLKHFYDSITPSFYYDFNQPLTICDVGAGAGFPSIPLKVVYPELKVTIVDSLNKRIQFLNHLAAELGLTQVSFVHDRAETFGKGVNRETYDVVTARAVARLTVLSELCLPLVKKGGQFIALKSSKGEEELEEAQFGISILGGVFSDSYTFDLPEDAGERQMIIIDKRRQTSKKYPRKPGTPNKSPLLEN.

S-adenosyl-L-methionine-binding positions include Gly-78, Phe-83, 129–130 (AE), and Arg-147. The segment at 218 to 240 (RRQTSKKYPRKPGTPNKSPLLEN) is disordered.

This sequence belongs to the methyltransferase superfamily. RNA methyltransferase RsmG family.

The protein localises to the cytoplasm. In terms of biological role, specifically methylates the N7 position of guanine in position 535 of 16S rRNA. The chain is Ribosomal RNA small subunit methyltransferase G from Staphylococcus haemolyticus (strain JCSC1435).